Here is a 213-residue protein sequence, read N- to C-terminus: 3-demethoxyubiquinol 3-hydroxylase (213 aa).

Fe cation-binding residues include Glu-62, Glu-92, His-95, Glu-144, Glu-176, and His-179.

The protein belongs to the COQ7 family. Fe cation is required as a cofactor.

The protein localises to the cell membrane. The catalysed reaction is a 5-methoxy-2-methyl-3-(all-trans-polyprenyl)benzene-1,4-diol + AH2 + O2 = a 3-demethylubiquinol + A + H2O. It functions in the pathway cofactor biosynthesis; ubiquinone biosynthesis. Catalyzes the hydroxylation of 2-nonaprenyl-3-methyl-6-methoxy-1,4-benzoquinol during ubiquinone biosynthesis. The polypeptide is 3-demethoxyubiquinol 3-hydroxylase (Legionella pneumophila (strain Corby)).